The following is a 180-amino-acid chain: Probable galaptin lec-8 (180 aa).

A Galectin domain is found at 11–138; sequence SAHAIREQLR…AAHIDEISFS (128 aa).

The chain is Probable galaptin lec-8 (lec-8) from Caenorhabditis elegans.